A 201-amino-acid chain; its full sequence is Large ribosomal subunit protein uL4 (201 aa).

A disordered region spans residues R39–R72. Residues T42–K53 show a composition bias toward polar residues.

Belongs to the universal ribosomal protein uL4 family. Part of the 50S ribosomal subunit.

Functionally, one of the primary rRNA binding proteins, this protein initially binds near the 5'-end of the 23S rRNA. It is important during the early stages of 50S assembly. It makes multiple contacts with different domains of the 23S rRNA in the assembled 50S subunit and ribosome. Its function is as follows. Forms part of the polypeptide exit tunnel. The protein is Large ribosomal subunit protein uL4 of Deinococcus deserti (strain DSM 17065 / CIP 109153 / LMG 22923 / VCD115).